The chain runs to 92 residues: Neuropeptide F (92 aa).

A signal peptide spans 1-27 (MSQSRPLALLVVAALVAAAVLVAAAEA). A propeptide spanning residues 28–51 (QQADGNKLEGLADALKYLQELDRY) is cleaved from the precursor. Phe-60 carries the phenylalanine amide modification. Residues 64 to 92 (AELRPDVVDDVIPEEMSADKFWRRFARRR) constitute a propeptide that is removed on maturation.

Belongs to the NPY family. As to expression, widely expressed in the nervous system. Expressed in corpora cardiaca, hypocerebral ganglion, frontal ganglion, protocerebrum, antennal lobe, tritocerebrum and thoracic ganglia. Not detected in corpora allata, pars intercerebralis, circumesophageal connectives, subesophageal ganglion, abdominal ganglion and abdominal perisympathetic organs.

It is found in the secreted. In terms of biological role, accelerates ovarian maturation in females. This chain is Neuropeptide F, found in Locusta migratoria (Migratory locust).